The primary structure comprises 324 residues: Ribose-phosphate pyrophosphokinase (324 aa).

Residues 45–47 (NGE) and 104–105 (RQ) contribute to the ATP site. Mg(2+) contacts are provided by histidine 138 and aspartate 178. Lysine 201 is an active-site residue. D-ribose 5-phosphate contacts are provided by residues arginine 203, aspartate 229, and 233-237 (DTGGT).

Belongs to the ribose-phosphate pyrophosphokinase family. Class I subfamily. In terms of assembly, homohexamer. Mg(2+) serves as cofactor.

The protein localises to the cytoplasm. The catalysed reaction is D-ribose 5-phosphate + ATP = 5-phospho-alpha-D-ribose 1-diphosphate + AMP + H(+). Its pathway is metabolic intermediate biosynthesis; 5-phospho-alpha-D-ribose 1-diphosphate biosynthesis; 5-phospho-alpha-D-ribose 1-diphosphate from D-ribose 5-phosphate (route I): step 1/1. Involved in the biosynthesis of the central metabolite phospho-alpha-D-ribosyl-1-pyrophosphate (PRPP) via the transfer of pyrophosphoryl group from ATP to 1-hydroxyl of ribose-5-phosphate (Rib-5-P). The chain is Ribose-phosphate pyrophosphokinase from Streptomyces coelicolor (strain ATCC BAA-471 / A3(2) / M145).